A 232-amino-acid chain; its full sequence is LexA repressor (232 aa).

The H-T-H motif DNA-binding region spans 26–46 (FDEMKDALDLRSKSGIHRLIT). Catalysis depends on for autocatalytic cleavage activity residues serine 153 and lysine 191.

This sequence belongs to the peptidase S24 family. In terms of assembly, homodimer.

It carries out the reaction Hydrolysis of Ala-|-Gly bond in repressor LexA.. In terms of biological role, represses a number of genes involved in the response to DNA damage (SOS response), including recA and lexA. In the presence of single-stranded DNA, RecA interacts with LexA causing an autocatalytic cleavage which disrupts the DNA-binding part of LexA, leading to derepression of the SOS regulon and eventually DNA repair. The sequence is that of LexA repressor from Bradyrhizobium sp. (strain ORS 278).